The sequence spans 101 residues: MAKVSAVNKNNKRIKLSDRLFKKRQALKKIVMDKKISLEERFKAQQKLSNLPRNSAKNRVMNRCQITGRPHGVYRKLKISRIALRDLGLHGLIPGMTKSSW.

It belongs to the universal ribosomal protein uS14 family. Part of the 30S ribosomal subunit. Contacts proteins S3 and S10.

In terms of biological role, binds 16S rRNA, required for the assembly of 30S particles and may also be responsible for determining the conformation of the 16S rRNA at the A site. The protein is Small ribosomal subunit protein uS14 of Pelagibacter ubique (strain HTCC1062).